Here is a 275-residue protein sequence, read N- to C-terminus: MTANVYALVAAAGSGTRLGFDTPKAFVELNGRSLLERSLDGLAASQSIEETIVLVSENMRDHAERIVNDPINVAEWAPMTVSVELGGGERFDSVYAGLVAIQRRLSAADEAPEGRFVAVHDAARCLTPPAMIAEVVDRARRGVADGSWYGAIPVLPVVDTIKVIDAPTSGPRAGQTVVEQTPDRASLRAAATPQVFDLGKLIEANEQYLRTTEISSAHAVDRVGASPLPLVTDDASLMEMAGFPVVAVDADPLAMKITTAQDYRVAQMILNGSEG.

It belongs to the IspD/TarI cytidylyltransferase family. IspD subfamily.

The enzyme catalyses 2-C-methyl-D-erythritol 4-phosphate + CTP + H(+) = 4-CDP-2-C-methyl-D-erythritol + diphosphate. It functions in the pathway isoprenoid biosynthesis; isopentenyl diphosphate biosynthesis via DXP pathway; isopentenyl diphosphate from 1-deoxy-D-xylulose 5-phosphate: step 2/6. Functionally, catalyzes the formation of 4-diphosphocytidyl-2-C-methyl-D-erythritol from CTP and 2-C-methyl-D-erythritol 4-phosphate (MEP). The polypeptide is 2-C-methyl-D-erythritol 4-phosphate cytidylyltransferase (Corynebacterium jeikeium (strain K411)).